A 116-amino-acid polypeptide reads, in one-letter code: MQNIPPQVQAMLGQLEGYQQQLQLVIQQKQKVQLELTEAKKALEEIEKVEEGTVIYKTVGTLIVKTDKAKALEELKEKVETLEVRLNALERQEKKLNEKLKELTQKIQTALRPTAG.

This sequence belongs to the prefoldin subunit beta family. As to quaternary structure, heterohexamer of two alpha and four beta subunits.

The protein resides in the cytoplasm. Functionally, molecular chaperone capable of stabilizing a range of proteins. Seems to fulfill an ATP-independent, HSP70-like function in archaeal de novo protein folding. In Thermococcus onnurineus (strain NA1), this protein is Prefoldin subunit beta.